Consider the following 8903-residue polypeptide: Nonribosomal peptide synthetase vlms (8903 aa).

The Carrier 1 domain maps to 11–84 (GSCRTTLGKV…ELADSIDEQN (74 aa)). The segment at 13-81 (CRTTLGKVAA…TLAELADSID (69 aa)) is thiolation (T) domain 1. An O-(pantetheine 4'-phosphoryl)serine modification is found at Ser45. 2 adenylation (A) domain regions span residues 59–736 (GIWV…SHLP) and 989–1386 (MAAQ…IKIR). A condensation (C) domain 1 region spans residues 572–953 (VPHQLDTEKL…FLLDGVNMSI (382 aa)). In terms of domain architecture, Carrier 2 spans 1524-1600 (SSMSTVEQEL…QLALAAESQA (77 aa)). A thiolation (T) domain 2 region spans residues 1529-1597 (VEQELRQIWS…TIPQLALAAE (69 aa)). Residue Ser1561 is modified to O-(pantetheine 4'-phosphoryl)serine. Residues 1613-2050 (FPLSPIQKMY…TVKELAAVSA (438 aa)) are epimerase (E) domain 1. The tract at residues 2091–2523 (DILPCSPIQQ…LLSVSEENKL (433 aa)) is condensation (C) domain 2. The interval 2546-2943 (MSSHADATAI…GRQDSQVKIR (398 aa)) is adenylation (A) domain 2. Residues 3084-3160 (LFTTAIERQL…ELALQAKMVD (77 aa)) enclose the Carrier 3 domain. The segment at 3089–3157 (IERQLRQVWS…TIPELALQAK (69 aa)) is thiolation (T) domain 3. Position 3121 is an O-(pantetheine 4'-phosphoryl)serine (Ser3121). The segment at 3174–3614 (FALSPIQQMY…AIKSLVEELM (441 aa)) is epimerase (E) domain 2. Residues 3655 to 4093 (EDILPCSPMQ…LMSTKDIQQL (439 aa)) form a condensation (C) domain 3 region. Positions 4114 to 4512 (ERLNTQPESM…GRIDTQIKIR (399 aa)) are adenylation (A) domain 3. In terms of domain architecture, Carrier 4 spans 4649 to 4725 (APRTTMEKKL…DLAEATELKC (77 aa)). The tract at residues 4654-4722 (MEKKLRDLFA…ILADLAEATE (69 aa)) is thiolation (T) domain 4. At Ser4686 the chain carries O-(pantetheine 4'-phosphoryl)serine. The tract at residues 4775 to 5191 (EDVYPCSPLQ…AQLQMLSEED (417 aa)) is condensation (C) domain 4. Residues 5216 to 5614 (ETMTSQPDAP…GRRDTQVKIR (399 aa)) form an adenylation (A) domain 4 region. The 77-residue stretch at 5753 to 5829 (APTTAMEKRL…DLAQELEQRH (77 aa)) folds into the Carrier 5 domain. Residues 5758–5826 (MEKRLQNLFC…RLGDLAQELE (69 aa)) form a thiolation (T) domain 5 region. Ser5790 is modified (O-(pantetheine 4'-phosphoryl)serine). Glu5875 is a region of interest (condensation (C) domain 5). Residues 6311–6702 (EEQMSLRPSE…GRMDGQIKIR (392 aa)) are adenylation (A) domain 5. The region spanning 6836-6912 (SSATNTERQL…ELAATLEVMD (77 aa)) is the Carrier 6 domain. Residues 6841 to 6909 (TERQLRQIWS…TIPELAATLE (69 aa)) form a thiolation (T) domain 6 region. An O-(pantetheine 4'-phosphoryl)serine modification is found at Ser6873. The segment at 6923-7349 (GFFELSPIQR…YGRTIKTLVE (427 aa)) is epimerase (E) domain 3. The interval 7391–7823 (EDILPCSPIQ…LVLTNDEAQI (433 aa)) is condensation (C) domain 6. Residues 7844–8240 (EQMARKPEAQ…LDRIGTQVKI (397 aa)) are adenylation (A) domain 6. A Carrier 7 domain is found at 8368-8444 (APISATEAVF…AMAACVSDVS (77 aa)). The tract at residues 8369 to 8441 (PISATEAVFC…VLHAMAACVS (73 aa)) is thiolation (T) domain 7. An O-(pantetheine 4'-phosphoryl)serine modification is found at Ser8405. A condensation (C) domain 7 region spans residues 8482 to 8897 (DVLPTTEFQT…MENPRSTVGH (416 aa)).

Belongs to the NRP synthetase family.

It participates in secondary metabolite biosynthesis. Functionally, nonribosomal peptide synthetase; part of the gene cluster that mediates the biosynthesis of verlamelin, a lipopeptide that exhibits antifungal activity against plant pathogenic fungi. Verlamelin is a cyclic hexadepsipeptide and is bridged by ester bonding between a 5-hydroxytetradecanoic acid moiety and a carboxyl group on the terminal Val of amide-bonded tetradecanoyl-hexapeptide D-allo-Thr-D-Ala-L-Pro-L-Gln-D-Tyr-L-Val. VlmA and vlmB are altogether regarded as essential components in the biosynthesis of 5-hydroxytetradecanoic acid. VlmA catalyzes the hydroxylation at position C5 of tetradecanoic acid produced in primary metabolism, while the precise function of vlmB still remains to be solved. To be loaded onto the waiting NRPS, 5-hydroxytetradecanoic acid is activated in the form of acyladenylate by the AMP-dependent ligase vlmC. VlmS seems to accept the fatty-acyl intermediate onto the initial module to further elongate amino acid residues by the downstream modules. In addition, in the last module at its C-terminus, vlmS contains a surplus condensation (C) domain that may be involved in cyclization, the last step to form verlamelin. This is Nonribosomal peptide synthetase vlms from Lecanicillium sp.